The sequence spans 274 residues: Cytochrome c oxidase subunit 3 (274 aa).

7 helical membrane-spanning segments follow: residues 22-42 (PSPW…GGVM), 47-67 (FAAG…SMLL), 93-113 (GVVL…WAFF), 137-157 (PFEV…TITV), 170-190 (TILY…LQWV), 208-228 (FFVA…FLTV), and 248-268 (AAIW…VSVY).

It belongs to the cytochrome c oxidase subunit 3 family. Component of the cytochrome c oxidase (complex IV, CIV), a multisubunit enzyme composed of a catalytic core of 3 subunits and several supernumerary subunits. The complex exists as a monomer or a dimer and forms supercomplexes (SCs) in the inner mitochondrial membrane with ubiquinol-cytochrome c oxidoreductase (cytochrome b-c1 complex, complex III, CIII).

It localises to the mitochondrion inner membrane. It carries out the reaction 4 Fe(II)-[cytochrome c] + O2 + 8 H(+)(in) = 4 Fe(III)-[cytochrome c] + 2 H2O + 4 H(+)(out). In terms of biological role, component of the cytochrome c oxidase, the last enzyme in the mitochondrial electron transport chain which drives oxidative phosphorylation. The respiratory chain contains 3 multisubunit complexes succinate dehydrogenase (complex II, CII), ubiquinol-cytochrome c oxidoreductase (cytochrome b-c1 complex, complex III, CIII) and cytochrome c oxidase (complex IV, CIV), that cooperate to transfer electrons derived from NADH and succinate to molecular oxygen, creating an electrochemical gradient over the inner membrane that drives transmembrane transport and the ATP synthase. Cytochrome c oxidase is the component of the respiratory chain that catalyzes the reduction of oxygen to water. Electrons originating from reduced cytochrome c in the intermembrane space (IMS) are transferred via the dinuclear copper A center (CU(A)) of subunit 2 and heme A of subunit 1 to the active site in subunit 1, a binuclear center (BNC) formed by heme A3 and copper B (CU(B)). The BNC reduces molecular oxygen to 2 water molecules using 4 electrons from cytochrome c in the IMS and 4 protons from the mitochondrial matrix. In Allomyces macrogynus, this protein is Cytochrome c oxidase subunit 3 (COX3).